Here is a 236-residue protein sequence, read N- to C-terminus: OPEP-2 protein (236 aa).

The protein is OPEP-2 protein (OPEP-2) of Orgyia pseudotsugata (Douglas-fir tussock moth).